A 461-amino-acid polypeptide reads, in one-letter code: tRNA modification GTPase MnmE (461 aa).

Arg21, Glu87, and Lys126 together coordinate (6S)-5-formyl-5,6,7,8-tetrahydrofolate. The 163-residue stretch at 222–384 folds into the TrmE-type G domain; the sequence is QSTVVLYGEP…LLELLKSKLT (163 aa). Asn232 serves as a coordination point for K(+). GTP contacts are provided by residues 232–237, 251–257, and 276–279; these read NTGKSS, SDVPGTT, and DTAG. Ser236 is a Mg(2+) binding site. K(+) is bound by residues Ser251, Val253, and Thr256. A Mg(2+)-binding site is contributed by Thr257. Lys461 lines the (6S)-5-formyl-5,6,7,8-tetrahydrofolate pocket.

It belongs to the TRAFAC class TrmE-Era-EngA-EngB-Septin-like GTPase superfamily. TrmE GTPase family. Homodimer. Heterotetramer of two MnmE and two MnmG subunits. K(+) is required as a cofactor.

It is found in the cytoplasm. In terms of biological role, exhibits a very high intrinsic GTPase hydrolysis rate. Involved in the addition of a carboxymethylaminomethyl (cmnm) group at the wobble position (U34) of certain tRNAs, forming tRNA-cmnm(5)s(2)U34. In Leptospira biflexa serovar Patoc (strain Patoc 1 / Ames), this protein is tRNA modification GTPase MnmE.